The sequence spans 196 residues: Peptidyl-tRNA hydrolase (196 aa).

Tyrosine 17 contacts tRNA. The active-site Proton acceptor is histidine 22. TRNA contacts are provided by phenylalanine 68, asparagine 70, and asparagine 116.

The protein belongs to the PTH family. In terms of assembly, monomer.

It localises to the cytoplasm. The enzyme catalyses an N-acyl-L-alpha-aminoacyl-tRNA + H2O = an N-acyl-L-amino acid + a tRNA + H(+). Functionally, hydrolyzes ribosome-free peptidyl-tRNAs (with 1 or more amino acids incorporated), which drop off the ribosome during protein synthesis, or as a result of ribosome stalling. Its function is as follows. Catalyzes the release of premature peptidyl moieties from peptidyl-tRNA molecules trapped in stalled 50S ribosomal subunits, and thus maintains levels of free tRNAs and 50S ribosomes. This is Peptidyl-tRNA hydrolase from Serratia proteamaculans (strain 568).